The following is a 156-amino-acid chain: Small ribosomal subunit protein uS7 (156 aa).

The protein belongs to the universal ribosomal protein uS7 family. Part of the 30S ribosomal subunit. Contacts proteins S9 and S11.

One of the primary rRNA binding proteins, it binds directly to 16S rRNA where it nucleates assembly of the head domain of the 30S subunit. Is located at the subunit interface close to the decoding center, probably blocks exit of the E-site tRNA. In Salinispora tropica (strain ATCC BAA-916 / DSM 44818 / JCM 13857 / NBRC 105044 / CNB-440), this protein is Small ribosomal subunit protein uS7.